The sequence spans 370 residues: Cobalt-precorrin-5B C(1)-methyltransferase (370 aa).

The protein belongs to the CbiD family.

It catalyses the reaction Co-precorrin-5B + S-adenosyl-L-methionine = Co-precorrin-6A + S-adenosyl-L-homocysteine. The protein operates within cofactor biosynthesis; adenosylcobalamin biosynthesis; cob(II)yrinate a,c-diamide from sirohydrochlorin (anaerobic route): step 6/10. In terms of biological role, catalyzes the methylation of C-1 in cobalt-precorrin-5B to form cobalt-precorrin-6A. This chain is Cobalt-precorrin-5B C(1)-methyltransferase, found in Trichormus variabilis (strain ATCC 29413 / PCC 7937) (Anabaena variabilis).